A 444-amino-acid chain; its full sequence is MMEFFPEIPKIQFEGKESTNPLAFKFYDPNEVIDGKPLKDHLKFSVAFWHTFVNEGRDPFGDPTAERPWNRFSDPMDKAFARVDALFEFCEKLNIEYFCFHDRDIAPEGKTLRETNKILDKVVERIKERMKDSNVKLLWGTANLFSHPRYMHGAATTCSADVFAYAAAQVKKALEITKELGGEGYVFWGGREGYETLLNTDLGLELENLARFLRMAVEYAKKIGFTGQFLIEPKPKEPTKHQYDFDVATAYAFLKNHGLDEYFKFNIEANHATLAGHTFQHELRMARILGKLGSIDANQGDLLLGWDTDQFPTNIYDTTLAMYEVIKAGGFTKGGLNFDAKVRRASYKVEDLFIGHIVGMDTFALGFKIAYKLVKDEVLDRFIEEKYRSFKEGIGKEIVEGKADFEKLEEYIIDKEDIELPSGKQEYLESLLNSYIVKTIAELR.

Active-site residues include His101 and Asp104. The Mg(2+) site is built by Glu232, Glu268, His271, Asp296, Asp307, Asp309, and Asp339.

Belongs to the xylose isomerase family. In terms of assembly, homotetramer. Mg(2+) serves as cofactor.

The protein localises to the cytoplasm. It catalyses the reaction alpha-D-xylose = alpha-D-xylulofuranose. This chain is Xylose isomerase, found in Thermotoga petrophila (strain ATCC BAA-488 / DSM 13995 / JCM 10881 / RKU-1).